We begin with the raw amino-acid sequence, 261 residues long: Segregation and condensation protein A (261 aa).

The protein belongs to the ScpA family. As to quaternary structure, component of a cohesin-like complex composed of ScpA, ScpB and the Smc homodimer, in which ScpA and ScpB bind to the head domain of Smc. The presence of the three proteins is required for the association of the complex with DNA.

The protein resides in the cytoplasm. Functionally, participates in chromosomal partition during cell division. May act via the formation of a condensin-like complex containing Smc and ScpB that pull DNA away from mid-cell into both cell halves. The polypeptide is Segregation and condensation protein A (Leptospira interrogans serogroup Icterohaemorrhagiae serovar copenhageni (strain Fiocruz L1-130)).